We begin with the raw amino-acid sequence, 62 residues long: DNA-directed RNA polymerase subunit Rpo10 (62 aa).

4 residues coordinate Zn(2+): Cys-6, Cys-9, Cys-43, and Cys-44.

This sequence belongs to the archaeal Rpo10/eukaryotic RPB10 RNA polymerase subunit family. In terms of assembly, part of the RNA polymerase complex. Zn(2+) is required as a cofactor.

It is found in the cytoplasm. The catalysed reaction is RNA(n) + a ribonucleoside 5'-triphosphate = RNA(n+1) + diphosphate. Its function is as follows. DNA-dependent RNA polymerase (RNAP) catalyzes the transcription of DNA into RNA using the four ribonucleoside triphosphates as substrates. The polypeptide is DNA-directed RNA polymerase subunit Rpo10 (Methanoregula boonei (strain DSM 21154 / JCM 14090 / 6A8)).